The following is an 858-amino-acid chain: Leucine--tRNA ligase (858 aa).

Residues 42 to 52 (PYPSGRLHMGH) carry the 'HIGH' region motif. The 'KMSKS' region signature appears at 618 to 622 (KMSKS). Position 621 (lysine 621) interacts with ATP.

It belongs to the class-I aminoacyl-tRNA synthetase family.

It is found in the cytoplasm. It catalyses the reaction tRNA(Leu) + L-leucine + ATP = L-leucyl-tRNA(Leu) + AMP + diphosphate. In Vibrio cholerae serotype O1 (strain ATCC 39541 / Classical Ogawa 395 / O395), this protein is Leucine--tRNA ligase.